The sequence spans 587 residues: Tyrosine-protein kinase transforming protein Src (587 aa).

The interval 1–58 (MGSSKSKPKDPSQRRRSLEPPDSTHHGGFPASQTPNKTAAPDTHRTPSRSFGTVATEP) is disordered. Gly-2 is lipidated: N-myristoyl glycine; by host. The segment covering 7-25 (KPKDPSQRRRSLEPPDSTH) has biased composition (basic and acidic residues). The SH3 domain maps to 81-142 (GGVTTFVALY…PSNYVAPSDS (62 aa)). The SH2 domain maps to 148 to 245 (WYFGKITRRE…GLCHRLTNVC (98 aa)). Residues 267-520 (LRLEVKLGQG…YLQAFLEDYF (254 aa)) enclose the Protein kinase domain. ATP contacts are provided by residues 273 to 281 (LGQGCFGEV) and Lys-295. Catalysis depends on Asp-386, which acts as the Proton acceptor. Tyr-416 carries the phosphotyrosine; by autocatalysis modification.

The protein belongs to the protein kinase superfamily. Tyr protein kinase family. SRC subfamily. Post-translationally, the phosphorylated form is termed pp60v-src.

The catalysed reaction is L-tyrosyl-[protein] + ATP = O-phospho-L-tyrosyl-[protein] + ADP + H(+). Functionally, this phosphoprotein, required for both the initiation and the maintenance of neoplastic transformation, is a protein kinase that catalyzes the phosphorylation of tyrosine residues in vitro. This is Tyrosine-protein kinase transforming protein Src (V-SRC) from Galliformes.